Here is a 59-residue protein sequence, read N- to C-terminus: Light-harvesting protein B-800-850 alpha chain A (59 aa).

At Met-1 to Lys-11 the chain is on the cytoplasmic side. Residues Pro-12 to Leu-35 form a helical membrane-spanning segment. A bacteriochlorophyll is bound at residue His-31. The Periplasmic segment spans residues Ser-36–Gly-59.

This sequence belongs to the antenna complex alpha subunit family. In terms of assembly, the core complex is formed by different alpha and beta chains, binding bacteriochlorophyll molecules, and arranged most probably in tetrameric structures disposed around the reaction center. The non-pigmented gamma chains may constitute additional components.

It localises to the cell inner membrane. Its function is as follows. Antenna complexes are light-harvesting systems, which transfer the excitation energy to the reaction centers. This Rhodopseudomonas palustris (strain ATCC BAA-98 / CGA009) protein is Light-harvesting protein B-800-850 alpha chain A (pucAA).